The sequence spans 153 residues: 3-hydroxyacyl-[acyl-carrier-protein] dehydratase FabZ (153 aa).

Histidine 56 is an active-site residue.

It belongs to the thioester dehydratase family. FabZ subfamily.

The protein localises to the cytoplasm. The catalysed reaction is a (3R)-hydroxyacyl-[ACP] = a (2E)-enoyl-[ACP] + H2O. Its function is as follows. Involved in unsaturated fatty acids biosynthesis. Catalyzes the dehydration of short chain beta-hydroxyacyl-ACPs and long chain saturated and unsaturated beta-hydroxyacyl-ACPs. This chain is 3-hydroxyacyl-[acyl-carrier-protein] dehydratase FabZ, found in Halorhodospira halophila (strain DSM 244 / SL1) (Ectothiorhodospira halophila (strain DSM 244 / SL1)).